We begin with the raw amino-acid sequence, 604 residues long: Putative JmjC domain-containing protein L887 (604 aa).

In terms of domain architecture, JmjC spans 1–127 (MNNMKKIIII…PNNKLNLIQP (127 aa)). Residues 4–24 (MKKIIIISIIIIIIIVLLFYI) form a helical membrane-spanning segment.

The protein localises to the membrane. This chain is Putative JmjC domain-containing protein L887, found in Acanthamoeba polyphaga (Amoeba).